Here is a 296-residue protein sequence, read N- to C-terminus: Chondrolectin (296 aa).

A signal peptide spans 1 to 20 (MRATLRILCALTFLVSCSRG). Topologically, residues 21 to 238 (ARVVSGQTVC…RLIIAGPSSM (218 aa)) are extracellular. The C-type lectin domain maps to 38 to 187 (CYKIAYFKDV…CNMKHNFICK (150 aa)). Positions 197–221 (VQSDRPGGHDVDLSTEDKEDRRTPP) are enriched in basic and acidic residues. Positions 197 to 229 (VQSDRPGGHDVDLSTEDKEDRRTPPTDEDESPR) are disordered. The helical transmembrane segment at 239–266 (LLIYVIIPTIPLLLLILVASGTCCFQML) threads the bilayer. Over 267 to 296 (SKSKPRTKTSVNQSTLWISKTPKIDSGMEV) the chain is Cytoplasmic.

Expressed in developing motor neurons.

It is found in the membrane. In terms of biological role, plays a role in the development of the nervous system such as in neurite outgrowth and elongation. Involved in motor axon growth and guidance. Required for correct interactions of motor axons with the horizontal myoseptum. The sequence is that of Chondrolectin (chodl) from Danio rerio (Zebrafish).